A 122-amino-acid chain; its full sequence is UPF0382 membrane protein SH2409 (122 aa).

4 consecutive transmembrane segments (helical) span residues Leu3–Ala23, Met46–Val66, Ala69–Leu89, and Ile98–Phe118.

Belongs to the UPF0382 family.

The protein localises to the cell membrane. The chain is UPF0382 membrane protein SH2409 from Staphylococcus haemolyticus (strain JCSC1435).